Consider the following 292-residue polypeptide: Histamine N-methyltransferase (292 aa).

E28 contacts substrate. 5 residues coordinate S-adenosyl-L-methionine: G60, E89, Q94, S120, and I142. Position 283 (N283) interacts with substrate.

The protein belongs to the class I-like SAM-binding methyltransferase superfamily. HNMT family. As to quaternary structure, monomer. As to expression, expressed in jejunum, brain &gt; lung, spleen, stomach &gt; liver, kidney.

The protein resides in the cytoplasm. The catalysed reaction is histamine + S-adenosyl-L-methionine = N(tau)-methylhistamine + S-adenosyl-L-homocysteine + H(+). Inactivates histamine by N-methylation. Plays an important role in degrading histamine and in regulating the airway response to histamine. The chain is Histamine N-methyltransferase (HNMT) from Cavia porcellus (Guinea pig).